The sequence spans 354 residues: Protein-arginine kinase (354 aa).

The 231-residue stretch at 24–254 folds into the Phosphagen kinase C-terminal domain; sequence IVLSSRIRLA…QQIIHQEKTA (231 aa). Residues 27-31, H92, R125, 176-180, and 207-212 contribute to the ATP site; these read SSRIR, RASVM, and RGIYGE. Positions 337-342 match the RDXXRA motif of the pArg binding pocket involved in allosteric regulation motif; it reads RDYRRA.

This sequence belongs to the ATP:guanido phosphotransferase family.

The catalysed reaction is L-arginyl-[protein] + ATP = N(omega)-phospho-L-arginyl-[protein] + ADP + H(+). Appears to be allosterically activated by the binding of pArg-containing polypeptides to the pArg-binding pocket localized in the C-terminal domain of McsB. Catalyzes the specific phosphorylation of arginine residues in a large number of proteins. Is part of the bacterial stress response system. Protein arginine phosphorylation has a physiologically important role and is involved in the regulation of many critical cellular processes, such as protein homeostasis, motility, competence, and stringent and stress responses, by regulating gene expression and protein activity. The sequence is that of Protein-arginine kinase from Bacillus mycoides (strain KBAB4) (Bacillus weihenstephanensis).